Reading from the N-terminus, the 444-residue chain is MLTTASSADILTLSPARGLRGQVSIPGDKSISHRALMLGSLAEGETVIHGLSLGEDPRSTAACFRALGADIPELNSECVRIQGVGLDRLQEPAEVLDAGNSGTTLRLMLGILAGQAGRFFAVTGDRSLRSRPMGRVVEPLRQMGANIWGRAGGNLAPLAVQGGSLKGIHYHSPVASAQVKSCLLLAGLLAEGTTQVTEPALSRDHSERMLRAFGAEISVDVAAKTVAVVGGSRLVGQTVQVPGDISSAAFWLVAASIVPESELLLQDVGLNPTRTGVLQVLQEMGADIQVEKRREVAGEPLGDLRVRSARLRGCSIAGDLIPTLIDEIPVLAVAAAFAEGTTVIRDAAELRVKESDRLAAIAQELSRMGAQVTEYPDGLEIKGGIPLQGAEVDSHADHRIAMSLMVAALAAQGSTTLRGADCARISYPDFIPTLQRLINPSSAS.

Residues Lys29, Ser30, and Arg34 each contribute to the 3-phosphoshikimate site. Lys29 lines the phosphoenolpyruvate pocket. Positions 102 and 131 each coordinate phosphoenolpyruvate. The 3-phosphoshikimate site is built by Ser176, Gln178, Asp326, and Lys353. Phosphoenolpyruvate is bound at residue Gln178. Asp326 (proton acceptor) is an active-site residue. Phosphoenolpyruvate is bound by residues Arg357 and Arg399.

This sequence belongs to the EPSP synthase family. Monomer.

The protein resides in the cytoplasm. The enzyme catalyses 3-phosphoshikimate + phosphoenolpyruvate = 5-O-(1-carboxyvinyl)-3-phosphoshikimate + phosphate. The protein operates within metabolic intermediate biosynthesis; chorismate biosynthesis; chorismate from D-erythrose 4-phosphate and phosphoenolpyruvate: step 6/7. Its function is as follows. Catalyzes the transfer of the enolpyruvyl moiety of phosphoenolpyruvate (PEP) to the 5-hydroxyl of shikimate-3-phosphate (S3P) to produce enolpyruvyl shikimate-3-phosphate and inorganic phosphate. In Synechococcus sp. (strain JA-3-3Ab) (Cyanobacteria bacterium Yellowstone A-Prime), this protein is 3-phosphoshikimate 1-carboxyvinyltransferase.